A 166-amino-acid chain; its full sequence is MFPMVTEFMNYGQQTVRATRYIGQGFMITLSHANRLPVTIQYPYEKLITSERFRGRIHFEFDKCIACEVCVRVCPIDLPVVDWKLETDIRKKRLLNYSIDFGICIFCGNCVEYCPTNCLSMTEEYELSTYDRHELNYNQIALGRLPMSIIDDYTIRTILNLPEIKT.

4Fe-4S ferredoxin-type domains are found at residues 55 to 84 and 95 to 124; these read GRIH…VDWK and LNYS…MTEE. C64, C67, C70, C74, C104, C107, C110, and C114 together coordinate [4Fe-4S] cluster.

The protein belongs to the complex I 23 kDa subunit family. In terms of assembly, NDH is composed of at least 16 different subunits, 5 of which are encoded in the nucleus. Requires [4Fe-4S] cluster as cofactor.

It is found in the plastid. It localises to the chloroplast thylakoid membrane. The enzyme catalyses a plastoquinone + NADH + (n+1) H(+)(in) = a plastoquinol + NAD(+) + n H(+)(out). The catalysed reaction is a plastoquinone + NADPH + (n+1) H(+)(in) = a plastoquinol + NADP(+) + n H(+)(out). NDH shuttles electrons from NAD(P)H:plastoquinone, via FMN and iron-sulfur (Fe-S) centers, to quinones in the photosynthetic chain and possibly in a chloroplast respiratory chain. The immediate electron acceptor for the enzyme in this species is believed to be plastoquinone. Couples the redox reaction to proton translocation, and thus conserves the redox energy in a proton gradient. The sequence is that of NAD(P)H-quinone oxidoreductase subunit I, chloroplastic from Aphanactis jamesoniana.